A 421-amino-acid chain; its full sequence is TITAN-like protein (421 aa).

The segment at 11-32 (EFCTVCRFHHDQGSRHKYFPRH) adopts a C2H2-type 1; degenerate zinc-finger fold. The C2H2-type 2; degenerate zinc finger occupies 70 to 100 (VWCVFCDEDIVELGSSFACSKAINHFASSDH). The segment at 279-306 (ISSSHSTDAGGNVHSGAPPPWLDANDGD) is disordered. 2 consecutive short sequence motifs (nuclear localization signal) follow at residues 328–335 (NRKLNPNR) and 377–384 (TRKESRKE). The interval 376-421 (GTRKESRKEFEKEKRKLVKTESISTESEPVKIQPYISKRARRESGE) is disordered. Over residues 377 to 389 (TRKESRKEFEKEK) the composition is skewed to basic and acidic residues.

In terms of tissue distribution, also present in cotyledons, hypocotyls, stems, veins of sepals and stigmas, and actively dividing tissues such as shoot apical meristem, root tips and emerging true leaves. Weak expression in petals and anthers, and not detected in mature leaves. In seeds, expressed in both the endosperm and embryo.

It localises to the nucleus. Key regulator for endosperm and embryo nuclear divisions. The protein is TITAN-like protein of Arabidopsis thaliana (Mouse-ear cress).